A 549-amino-acid chain; its full sequence is Glucose-6-phosphate isomerase (549 aa).

E355 acts as the Proton donor in catalysis. Residues H387 and K515 contribute to the active site.

The protein belongs to the GPI family.

Its subcellular location is the cytoplasm. The enzyme catalyses alpha-D-glucose 6-phosphate = beta-D-fructose 6-phosphate. The protein operates within carbohydrate biosynthesis; gluconeogenesis. It functions in the pathway carbohydrate degradation; glycolysis; D-glyceraldehyde 3-phosphate and glycerone phosphate from D-glucose: step 2/4. Catalyzes the reversible isomerization of glucose-6-phosphate to fructose-6-phosphate. This is Glucose-6-phosphate isomerase from Haemophilus influenzae (strain PittGG).